We begin with the raw amino-acid sequence, 1829 residues long: DNA polymerase (1829 aa).

DOD-type homing endonuclease domains are found at residues 527–668 (LSGI…SLGI) and 1136–1269 (FLGY…SLGV).

It belongs to the DNA polymerase type-B family. Post-translationally, this protein undergoes a protein self splicing that involves a post-translational excision of the three intervening regions (inteins) followed by peptide ligation.

It carries out the reaction DNA(n) + a 2'-deoxyribonucleoside 5'-triphosphate = DNA(n+1) + diphosphate. The chain is DNA polymerase (pol) from Thermococcus aggregans.